Reading from the N-terminus, the 388-residue chain is P2X purinoceptor 4 (388 aa).

At 1–33 (MTGCCTVLGAFLFEYDTPRIVLIRSRKVGLMNR) the chain is on the cytoplasmic side. Residues 34–54 (TVQLLILAYVIGWVFVWEKGY) traverse the membrane as a helical segment. At 55–338 (QETDSVVSSV…KFDIIPTMIN (284 aa)) the chain is on the extracellular side. Residues Lys67 and Lys69 each coordinate ATP. Lys67 and Lys69 together coordinate CTP. Residues Asn75, Asn110, Asn131, Asn153, and Asn184 are each glycosylated (N-linked (GlcNAc...) asparagine). 3 disulfide bridges follow: Cys116–Cys165, Cys126–Cys149, and Cys132–Cys159. Residues Thr186 and Leu188 each coordinate ATP. A CTP-binding site is contributed by Thr186. 2 N-linked (GlcNAc...) asparagine glycosylation sites follow: Asn199 and Asn208. Intrachain disulfides connect Cys217–Cys227 and Cys261–Cys270. 3 residues coordinate ATP: Asn293, Arg295, and Lys313. Positions 293, 295, and 313 each coordinate CTP. The helical transmembrane segment at 339–359 (IGSGLALLGVATVLCDVIVLY) threads the bilayer. Topologically, residues 360-388 (CMKKRYYYREKKYKYVEDYEQGLGNQMEQ) are cytoplasmic.

This sequence belongs to the P2X receptor family. As to quaternary structure, functional P2RXs are organized as homomeric and heteromeric trimers. Forms heterotrimer with P2RX1. Interacts with P2RX7 (via C-terminus); this interaction is functional only in the presence of ATP. Forms heterotrimer with P2RX4; functional differences between homomeric P2RX4 and P2RX4/6 heterotrimer are minor. Interacts with AP1M2.

The protein resides in the cell membrane. Its subcellular location is the lysosome membrane. The enzyme catalyses K(+)(in) = K(+)(out). It carries out the reaction Na(+)(in) = Na(+)(out). It catalyses the reaction Ca(2+)(in) = Ca(2+)(out). Activated by ATP. pH-dependent and inhibited by acidic pH. Its function is as follows. ATP-gated nonselective transmembrane cation channel permeable to potassium, sodium and calcium. CTP, but not GTP or UTP, functions as a weak affinity agonist for P2RX4. Activated by extracellularly released ATP, it plays multiple role in immunity and central nervous system physiology. Could also function as an ATP-gated cation channel of lysosomal membranes. The protein is P2X purinoceptor 4 (P2RX4) of Bos taurus (Bovine).